The primary structure comprises 361 residues: Phospho-N-acetylmuramoyl-pentapeptide-transferase (361 aa).

10 helical membrane-spanning segments follow: residues 25–45, 72–92, 95–115, 135–155, 169–189, 200–220, 240–260, 264–284, 289–309, and 338–358; these read TGGA…WIID, TPTM…VLWA, LNPY…VGFY, LLIE…LGRG, VVLN…VGAG, GLAI…SYLV, LAVL…FNAP, IFMG…IAVA, IVLA…IVQV, and QIVI…LSTL.

This sequence belongs to the glycosyltransferase 4 family. MraY subfamily. Mg(2+) is required as a cofactor.

The protein localises to the cell inner membrane. It catalyses the reaction UDP-N-acetyl-alpha-D-muramoyl-L-alanyl-gamma-D-glutamyl-meso-2,6-diaminopimeloyl-D-alanyl-D-alanine + di-trans,octa-cis-undecaprenyl phosphate = di-trans,octa-cis-undecaprenyl diphospho-N-acetyl-alpha-D-muramoyl-L-alanyl-D-glutamyl-meso-2,6-diaminopimeloyl-D-alanyl-D-alanine + UMP. The protein operates within cell wall biogenesis; peptidoglycan biosynthesis. Catalyzes the initial step of the lipid cycle reactions in the biosynthesis of the cell wall peptidoglycan: transfers peptidoglycan precursor phospho-MurNAc-pentapeptide from UDP-MurNAc-pentapeptide onto the lipid carrier undecaprenyl phosphate, yielding undecaprenyl-pyrophosphoryl-MurNAc-pentapeptide, known as lipid I. The polypeptide is Phospho-N-acetylmuramoyl-pentapeptide-transferase (Rhodopseudomonas palustris (strain HaA2)).